The following is a 153-amino-acid chain: D-aminoacyl-tRNA deacylase (153 aa).

The Gly-cisPro motif, important for rejection of L-amino acids signature appears at 142–143; sequence GP.

It belongs to the DTD family. As to quaternary structure, homodimer.

It localises to the cytoplasm. It carries out the reaction glycyl-tRNA(Ala) + H2O = tRNA(Ala) + glycine + H(+). The enzyme catalyses a D-aminoacyl-tRNA + H2O = a tRNA + a D-alpha-amino acid + H(+). In terms of biological role, an aminoacyl-tRNA editing enzyme that deacylates mischarged D-aminoacyl-tRNAs. Also deacylates mischarged glycyl-tRNA(Ala), protecting cells against glycine mischarging by AlaRS. Acts via tRNA-based rather than protein-based catalysis; rejects L-amino acids rather than detecting D-amino acids in the active site. By recycling D-aminoacyl-tRNA to D-amino acids and free tRNA molecules, this enzyme counteracts the toxicity associated with the formation of D-aminoacyl-tRNA entities in vivo and helps enforce protein L-homochirality. The protein is D-aminoacyl-tRNA deacylase of Cupriavidus necator (strain ATCC 17699 / DSM 428 / KCTC 22496 / NCIMB 10442 / H16 / Stanier 337) (Ralstonia eutropha).